A 236-amino-acid chain; its full sequence is Snake venom serine protease ussurin (236 aa).

The region spanning 1–227 (VIGGVECNIN…YTDWIQSIIS (227 aa)) is the Peptidase S1 domain. Cysteine 28 and cysteine 44 are joined by a disulfide. Residues histidine 43 and aspartate 88 each act as charge relay system in the active site. N-linked (GlcNAc...) asparagine glycans are attached at residues asparagine 99 and asparagine 100. Intrachain disulfides connect cysteine 120/cysteine 188, cysteine 152/cysteine 167, and cysteine 178/cysteine 203. Serine 182 functions as the Charge relay system in the catalytic mechanism.

Belongs to the peptidase S1 family. Snake venom subfamily. In terms of assembly, monomer. Expressed by the venom gland.

The protein resides in the secreted. In terms of biological role, snake venom serine protease that may act in the hemostasis system of the prey. This is Snake venom serine protease ussurin from Gloydius ussuriensis (Ussuri mamushi).